Reading from the N-terminus, the 179-residue chain is tRNA (cytidine(56)-2'-O)-methyltransferase (179 aa).

Residues L82, 110–114 (GAEKV), and 128–135 (VGNQPHSE) contribute to the S-adenosyl-L-methionine site.

Belongs to the aTrm56 family. In terms of assembly, homodimer.

The protein resides in the cytoplasm. It catalyses the reaction cytidine(56) in tRNA + S-adenosyl-L-methionine = 2'-O-methylcytidine(56) in tRNA + S-adenosyl-L-homocysteine + H(+). In terms of biological role, specifically catalyzes the AdoMet-dependent 2'-O-ribose methylation of cytidine at position 56 in tRNAs. In Methanocaldococcus jannaschii (strain ATCC 43067 / DSM 2661 / JAL-1 / JCM 10045 / NBRC 100440) (Methanococcus jannaschii), this protein is tRNA (cytidine(56)-2'-O)-methyltransferase.